The chain runs to 436 residues: 3-ketoacyl-CoA thiolase (436 aa).

The Acyl-thioester intermediate role is filled by Cys99. Residues His392 and Cys422 each act as proton acceptor in the active site.

Belongs to the thiolase-like superfamily. Thiolase family. As to quaternary structure, heterotetramer of two alpha chains (FadJ) and two beta chains (FadI).

It is found in the cytoplasm. It catalyses the reaction an acyl-CoA + acetyl-CoA = a 3-oxoacyl-CoA + CoA. It functions in the pathway lipid metabolism; fatty acid beta-oxidation. Its function is as follows. Catalyzes the final step of fatty acid oxidation in which acetyl-CoA is released and the CoA ester of a fatty acid two carbons shorter is formed. The polypeptide is 3-ketoacyl-CoA thiolase (Pseudoalteromonas atlantica (strain T6c / ATCC BAA-1087)).